A 494-amino-acid polypeptide reads, in one-letter code: MAAPAATDQAWEAVIGLETHVQLGTNSKIFTAASTAFGDDPNTHIDPVVCGLPGTLPVLNQKVLEYAVKAAMALNLNIAEHSKFDRKQYFYPDLPKNYQISQYDEPIAEDGWIEVEVAEKGKDTYLKTIGIERLHMEEDAGKLVHAGSDRLAGSTHSLVDYNRAGVALAEIVSKPDLRTGREAAEYASEIRRIMRYLGVSDGNMQEGSLRCDVNISVRRGPEAPFGTKVEIKNMNSFSAIQKACEYEIQRQIKAYEAGEPIVQETRLWDESKQLTKSMRSKEGASDYRYFPDPDLGPIEVSADQRDSWRAELPELPAAKRHRYADTLGLSQYDARVLTDEKPMADYFEAVVVAGADAKLAANWITGDIAAYVNSNRLSYANLPFRPEQLAEMVQLIDGGKISGKIAKEILPELLENGGSPKAIVDERGLGMISDPAAIEAIVDELLGAHPDEVEAFRGGKTKLQGFFVGQLMKKTGGKADPKLANQILSKKLKG.

Belongs to the GatB/GatE family. GatB subfamily. Heterotrimer of A, B and C subunits.

It carries out the reaction L-glutamyl-tRNA(Gln) + L-glutamine + ATP + H2O = L-glutaminyl-tRNA(Gln) + L-glutamate + ADP + phosphate + H(+). The catalysed reaction is L-aspartyl-tRNA(Asn) + L-glutamine + ATP + H2O = L-asparaginyl-tRNA(Asn) + L-glutamate + ADP + phosphate + 2 H(+). Its function is as follows. Allows the formation of correctly charged Asn-tRNA(Asn) or Gln-tRNA(Gln) through the transamidation of misacylated Asp-tRNA(Asn) or Glu-tRNA(Gln) in organisms which lack either or both of asparaginyl-tRNA or glutaminyl-tRNA synthetases. The reaction takes place in the presence of glutamine and ATP through an activated phospho-Asp-tRNA(Asn) or phospho-Glu-tRNA(Gln). The sequence is that of Aspartyl/glutamyl-tRNA(Asn/Gln) amidotransferase subunit B from Synechococcus sp. (strain WH7803).